We begin with the raw amino-acid sequence, 485 residues long: Cysteine--tRNA ligase (485 aa).

Position 28 (Cys-28) interacts with Zn(2+). Residues 30–40 (MTVYDLCHVGH) carry the 'HIGH' region motif. Cys-209, His-234, and Glu-238 together coordinate Zn(2+). Residues 266–270 (KMSKS) carry the 'KMSKS' region motif. Lys-269 is an ATP binding site.

This sequence belongs to the class-I aminoacyl-tRNA synthetase family. As to quaternary structure, monomer. The cofactor is Zn(2+).

Its subcellular location is the cytoplasm. The enzyme catalyses tRNA(Cys) + L-cysteine + ATP = L-cysteinyl-tRNA(Cys) + AMP + diphosphate. This chain is Cysteine--tRNA ligase, found in Nitrosococcus oceani (strain ATCC 19707 / BCRC 17464 / JCM 30415 / NCIMB 11848 / C-107).